The following is a 182-amino-acid chain: Plasmolipin (182 aa).

At Met-1–Ser-35 the chain is on the cytoplasmic side. Ser-9 carries the post-translational modification Phosphoserine. The MARVEL domain maps to Phe-32–Arg-166. A helical membrane pass occupies residues Ala-36–Ala-56. Residues Asp-57–Trp-68 are Extracellular-facing. The helical transmembrane segment at Val-69–Phe-89 threads the bilayer. Residues Gln-90 to Pro-99 are Cytoplasmic-facing. The helical transmembrane segment at Trp-100–Ile-120 threads the bilayer. The Extracellular segment spans residues Ala-121–Ser-141. Residues Ala-142–Phe-162 form a helical membrane-spanning segment. Residues Gln-163–Ser-182 lie on the Cytoplasmic side of the membrane.

Belongs to the MAL family. In terms of assembly, forms oligomers. Post-translationally, phosphorylated.

It localises to the membrane. The protein localises to the cell membrane. Its subcellular location is the myelin membrane. It is found in the apical cell membrane. Its function is as follows. Main component of the myelin sheath that plays an important role in myelin membrane biogenesis and myelination. Plays an essential function in apical endocytosis. Regulates epithelial development through the regulation of apical endocytosis. Part of the intracellular machinery that mediates basolateral-to-apical transport of ICAM-1, an essential adhesion receptor in epithelial cells, from the subapical compartment in hepatic epithelial cells. The protein is Plasmolipin (Pllp) of Mus musculus (Mouse).